The sequence spans 366 residues: Phospho-N-acetylmuramoyl-pentapeptide-transferase (366 aa).

A run of 10 helical transmembrane segments spans residues 3 to 23 (QIFIAGAVAFLVSVFLTPVLI), 54 to 74 (GIAVLAGIVFGYLIAVLVGLV), 80 to 100 (PGVSGWLVLGLTLALGGLGFA), 120 to 140 (LVGQLVTAIVFGLLILQFPNA), 161 to 181 (IAIGPAIVGMILFLIFIYLVI), 197 to 217 (LASGVTAIVMGTYVLITFWQF), 238 to 258 (LSMLASAGLGACLGFLWWNAA), 262 to 282 (IFMGDTGSLALGGLVAGLSVT), 288 to 308 (LMILVGIIFVIEAASVVIQVV), and 341 to 361 (FWLLAALAAMSGFAVFYAEWL).

The protein belongs to the glycosyltransferase 4 family. MraY subfamily. Mg(2+) serves as cofactor.

The protein localises to the cell membrane. It carries out the reaction UDP-N-acetyl-alpha-D-muramoyl-L-alanyl-gamma-D-glutamyl-meso-2,6-diaminopimeloyl-D-alanyl-D-alanine + di-trans,octa-cis-undecaprenyl phosphate = di-trans,octa-cis-undecaprenyl diphospho-N-acetyl-alpha-D-muramoyl-L-alanyl-D-glutamyl-meso-2,6-diaminopimeloyl-D-alanyl-D-alanine + UMP. The protein operates within cell wall biogenesis; peptidoglycan biosynthesis. Its function is as follows. Catalyzes the initial step of the lipid cycle reactions in the biosynthesis of the cell wall peptidoglycan: transfers peptidoglycan precursor phospho-MurNAc-pentapeptide from UDP-MurNAc-pentapeptide onto the lipid carrier undecaprenyl phosphate, yielding undecaprenyl-pyrophosphoryl-MurNAc-pentapeptide, known as lipid I. The chain is Phospho-N-acetylmuramoyl-pentapeptide-transferase from Corynebacterium jeikeium (strain K411).